The following is a 1140-amino-acid chain: MVGWVCISLVVLATTTAGLTRNLYELKIECPHTVGLGQGYVTGSVETTPILLTQVTDLKIESSCNFDLHVPSTSIQKYNQVEWAKKSSTTESTSAGATTFEAKTKEVSLKGTCNIPVTTFEAAYKSRKTVICYDLACNQTHCLPTVHLIAPVQTCMSVRSCMIGLLSSRIQVIYEKTYCVTGQLVEGLCFIPTHTIALTQPGHTYDTMTLPITCFLVAKKLGTQLKIAVELEKLITASGCTENSFQGYYICFLGKHSEPLFVPMMDDYRSAELFTRMVLNPRGEDHDPDQNGQGLMRIAGPITAKVPSTETTETMQGIAFAGAPMYSSFSTLVRKADPDYVFSPGIIAESNHSVCDKKTIPLTWTGFLAVSGEIEKITGCTVFCTLVGPGASCEAYSETGIFNISSPTCLVNKVQKFRGSEQRINFMCQRVDQDVIVYCNGQKKVILTKTLVIGQCIYTFTSLFSLIPGVAHSLAVELCVPGLHGWATTALLITFCFGWLLIPTITMIILKILRLLTFSCSHYSTESKFKAILERVKVEYQKTMGSMVCDVCHHECETAKELETHKKSCPEGQCPYCMTMTESTESALQAHFSICKLTNRFQENLKKSLKRPEVKQGCYRTLGVFRYKSRCYVGLVWGVLLTTELIVWAASADTPLMESGWSDTAHGVGIVPMKTDLELDFALASSSSYSYRRKLVNPANKEETLPFHFQLDKQVVHAEIQNLGHWMDGTFNIKTAFHCYGECKKYAYPWQTAKCFFEKDYQYETSWGCNPPDCPGVGTGCTACGVYLDKLRSVGKAYKIVSLKFTRKVCIQLGTEQTCKHIDVNDCLVTPSVKVCLIGTISKLQPGDTLLFLGPLEQGGIILKQWCTTSCVFGDPGDIMSTTTGMKCPEHTGSFRKICGFATTPTCEYQGNTISGFQRMMATRDSFQSFNVTEPHITSNRLEWIDPDSSIKDHINMVLNRDVSFQDLSDNPCKVDLHTQSIDGAWGSGVGFTLVCTVGLTECANFITSIKACDSAMCYGATVTNLLRGSNTVKVVGKGGHSGSLFKCCHDTDCTEEGLAASPPHLDRVTGYNQIDSDKVYDDGAPPCTIKCWFTKSGEWLLGILNGNWVVVAVLIVILILSILLFSFFCPIRGRKNKSN.

Residues 1-17 form the signal peptide; that stretch reads MVGWVCISLVVLATTTA. Over 18–489 the chain is Lumenal; it reads GLTRNLYELK…VPGLHGWATT (472 aa). 6 cysteine pairs are disulfide-bonded: C30-C155, C64-C161, C113-C132, C137-C142, C179-C189, and C214-C251. An N-linked (GlcNAc...) asparagine; by host glycan is attached at N138. N351 is a glycosylation site (N-linked (GlcNAc...) asparagine; by host). 4 disulfides stabilise this stretch: C380–C439, C384–C393, C409–C428, and C456–C479. The N-linked (GlcNAc...) asparagine; by host glycan is linked to N403. The chain crosses the membrane as a helical span at residues 490 to 510; the sequence is ALLITFCFGWLLIPTITMIIL. Residues 511 to 631 are Cytoplasmic-facing; the sequence is KILRLLTFSC…LGVFRYKSRC (121 aa). A binding to the ribonucleoprotein region spans residues 520-537; sequence CSHYSTESKFKAILERVK. 2 consecutive CCHC-type zinc fingers follow at residues 549–569 and 574–595; these read CDVCHHECETAKELETHKKSC and CPYCMTMTESTESALQAHFSIC. Binding to the ribonucleoprotein stretches follow at residues 592–609, 596–607, and 615–629; these read FSICKLTNRFQENLKKSL, KLTNRFQENLKK, and KQGCYRTLGVFRYKS. The interval 611-638 is interaction with host TRAF3; that stretch reads RPEVKQGCYRTLGVFRYKSRCYVGLVWG. Residues 615 to 638 enclose the ITAM domain; it reads KQGCYRTLGVFRYKSRCYVGLVWG. Residues Y619 and Y632 each carry the phosphotyrosine; by host modification. Residues 619–622 carry the YxxL motif; it reads YRTL. Residues 632–652 form a helical membrane-spanning segment; sequence YVGLVWGVLLTTELIVWAASA. Residues 653 to 1108 are Lumenal-facing; the sequence is DTPLMESGWS…EWLLGILNGN (456 aa). Disulfide bonds link C739/C774, C743/C781, C755/C888, C769/C899, C784/C907, C810/C819, C827/C836, and C867/C871. A fusion loop region spans residues 761–781; the sequence is YQYETSWGCNPPDCPGVGTGC. N931 carries N-linked (GlcNAc...) asparagine; by host glycosylation. Cystine bridges form between C973–C1003, C996–C1048, C1013–C1018, C1049–C1054, and C1088–C1092. Residues 1109–1129 form a helical membrane-spanning segment; sequence WVVVAVLIVILILSILLFSFF. The tract at residues 1125 to 1140 is binding to the ribonucleoprotein; sequence LFSFFCPIRGRKNKSN. The Cytoplasmic portion of the chain corresponds to 1130–1140; that stretch reads CPIRGRKNKSN.

The protein belongs to the hantavirus envelope glycoprotein family. As to quaternary structure, homodimer. Homotetramer; forms heterotetrameric Gn-Gc spikes in the pre-fusion conformation. Interacts (via C-terminus) with the nucleoprotein. Interacts with host TUFM; this interaction contributes to the virus-induced degradation of mitochondria by autophagy, which leads to degradation of host MAVS and inhibition of type I interferon (IFN) responses. Interacts with host MAP1LC3B; this interaction contributes to the virus-induced degradation of mitochondria by autophagy, which leads to degradation of host MAVS and inhibition of type I interferon (IFN) responses. Interacts (via C-terminus) with host TRAF3 (via N-terminus); this interaction inhibits the formation of TRAF3-TBK1 complexes. In terms of assembly, homodimer. Homotetramer; forms heterotetrameric Gn-Gc spikes in the pre-fusion conformation. Homotrimer; forms homotrimer in the post-fusion conformation at acidic pH. Interacts (via C-terminus) with the nucleoprotein. In terms of processing, envelope polyprotein precursor is quickly cleaved in vivo just after synthesis, presumably by host signal peptidase.

It localises to the virion membrane. The protein resides in the host cell surface. Its subcellular location is the host Golgi apparatus membrane. It is found in the host endoplasmic reticulum membrane. The protein localises to the host mitochondrion. Forms homotetramers with glycoprotein C at the surface of the virion. Attaches the virion to host cell receptors including integrin ITGAV/ITGB3. This attachment induces virion internalization predominantly through clathrin-dependent endocytosis. Mediates the assembly and budding of infectious virus particles through its interaction with the nucleocapsid protein and the viral genome. May dysregulate normal immune and endothelial cell responses through an ITAM motif. Translocates to mitochondria, binds to host TUFM and recruits MAP1LC3B. These interactions induce mitochondrial autophagy and therefore destruction of host MAVS leading to inhibition of type I interferon (IFN) responses. Concomitant breakdown of glycoprotein N is apparently prevented by the nucleoprotein that may inhibit Gn-stimulated autophagosome-lysosome fusion. Interacts with the viral genomic RNA. Inhibits the host RIG-I/TBK1 pathway by disrupting the formation of TBK1-TRAF3 complexes and downstream signaling responses required for IFN-beta transcription. In terms of biological role, forms homotetramers with glycoprotein N at the surface of the virion. Attaches the virion to host cell receptors including integrin ITGAV/ITGB3. This attachment induces virion internalization predominantly through clathrin-dependent endocytosis. Class II fusion protein that promotes fusion of viral membrane with host endosomal membrane after endocytosis of the virion. The chain is Envelopment polyprotein (GP) from Homo sapiens (Human).